A 145-amino-acid chain; its full sequence is Deoxyuridine 5'-triphosphate nucleotidohydrolase (145 aa).

Residues 63-65 (RSG), Gln76, and 80-82 (TVD) contribute to the substrate site.

Belongs to the dUTPase family. It depends on Mg(2+) as a cofactor.

It catalyses the reaction dUTP + H2O = dUMP + diphosphate + H(+). The protein operates within pyrimidine metabolism; dUMP biosynthesis; dUMP from dCTP (dUTP route): step 2/2. Functionally, this enzyme is involved in nucleotide metabolism: it produces dUMP, the immediate precursor of thymidine nucleotides and it decreases the intracellular concentration of dUTP so that uracil cannot be incorporated into DNA. This chain is Deoxyuridine 5'-triphosphate nucleotidohydrolase, found in Chlamydia muridarum (strain MoPn / Nigg).